The chain runs to 64 residues: Large ribosomal subunit protein bL33 (64 aa).

This sequence belongs to the bacterial ribosomal protein bL33 family.

This Synechococcus elongatus (strain ATCC 33912 / PCC 7942 / FACHB-805) (Anacystis nidulans R2) protein is Large ribosomal subunit protein bL33.